Consider the following 236-residue polypeptide: Small ribosomal subunit protein uS3 (236 aa).

In terms of domain architecture, KH type-2 spans 39-107; the sequence is VRHFLMQKLS…PTQLNIAEVR (69 aa).

Belongs to the universal ribosomal protein uS3 family. Part of the 30S ribosomal subunit. Forms a tight complex with proteins S10 and S14.

Its function is as follows. Binds the lower part of the 30S subunit head. Binds mRNA in the 70S ribosome, positioning it for translation. The polypeptide is Small ribosomal subunit protein uS3 (Blochmanniella pennsylvanica (strain BPEN)).